The chain runs to 369 residues: Caffeine synthase 1 (369 aa).

Position 24 (Tyr24) interacts with S-adenosyl-L-homocysteine. Thr31 provides a ligand contact to caffeine. Residues Cys66, Asn71, Asp103, Leu104, Ser138, and Phe139 each contribute to the S-adenosyl-L-homocysteine site. Caffeine contacts are provided by Tyr156, His159, and Trp160. Asn177 is a Mg(2+) binding site. Arg225 serves as a coordination point for caffeine. Mg(2+)-binding residues include Asp263, Phe265, and Asn266. Caffeine is bound at residue Phe321.

It belongs to the methyltransferase superfamily. Type-7 methyltransferase family. Mg(2+) serves as cofactor.

The catalysed reaction is theobromine + S-adenosyl-L-methionine = caffeine + S-adenosyl-L-homocysteine + H(+). It catalyses the reaction 7-methylxanthine + S-adenosyl-L-methionine = theobromine + S-adenosyl-L-homocysteine + H(+). Its pathway is alkaloid biosynthesis. In terms of biological role, involved in the biosynthesis of caffeine. Catalyzes the conversion of 7-methylxanthine (7mX) to theobromine and of theobromine to caffeine. The polypeptide is Caffeine synthase 1 (Camellia crassicolumna (Evergreen tea)).